A 396-amino-acid chain; its full sequence is Probable sugar efflux transporter (396 aa).

A run of 12 helical transmembrane segments spans residues 15–35 (VVTL…PVGL), 50–70 (VGIM…PFML), 81–101 (LICL…AWNF), 103–123 (VLVI…SITA), 136–156 (AQAL…GLPI), 169–189 (TFFA…KLLP), 209–229 (PALM…YTAY), 246–266 (FATV…LVFG), 275–295 (SLVS…LPAA), 301–321 (LAIL…GMQV), 333–353 (VAMA…ALVG), and 364–384 (AIGY…VLIF).

Belongs to the major facilitator superfamily. SotB (TC 2.A.1.2) family.

It localises to the cell inner membrane. In terms of biological role, involved in the efflux of sugars. The physiological role may be the reduction of the intracellular concentration of toxic sugars or sugar metabolites. The polypeptide is Probable sugar efflux transporter (Salmonella paratyphi C (strain RKS4594)).